The primary structure comprises 213 residues: Probable glutathione S-transferase DHAR1, cytosolic (213 aa).

Positions 8 and 19 each coordinate glutathione. 2 residues coordinate L-ascorbate: K8 and D19. In terms of domain architecture, GST N-terminal spans 10–89 (AVGHPDTLGD…VIEEKYPTPS (80 aa)). C20 serves as the catalytic Nucleophile. K47, V60, S74, H160, and W207 together coordinate glutathione. Positions 73-213 (DSDVITQVIE…IAGWAPKVNA (141 aa)) constitute a GST C-terminal domain. L-ascorbate is bound at residue K210.

Belongs to the GST superfamily. DHAR family. Monomer.

It is found in the cytoplasm. Its subcellular location is the cytosol. It catalyses the reaction RX + glutathione = an S-substituted glutathione + a halide anion + H(+). The enzyme catalyses L-dehydroascorbate + 2 glutathione = glutathione disulfide + L-ascorbate. Functionally, involved in ascorbate homeostasis. Maintains redox pools of ascorbate by recycling dihydroascorbate (DHA) to ascorbate. Involved in scavenging reactive oxygen species (ROS) under oxidative stresses. Possesses dehydroascorbate reductase (DHAR) activity in vitro. May function via a ping-pong reaction mechanism with an electron transfer at the active site. Possesses chaperone-like activity in vitro. The sequence is that of Probable glutathione S-transferase DHAR1, cytosolic from Oryza sativa subsp. japonica (Rice).